The primary structure comprises 711 residues: MLNFFAAAPRGYEYALSLELADLGASEIKESVAGVYFSASLELGYRITLWSRIASRIILVIHKGPCESPEQLYNAAYGIDWQMEFNHRSTFSIDFHGMGGFINNTMFGALKIKDAIVDRFRDDDCPRPDVARVDADFRIDAHYRRGQITIGLNFSGPALHKRGYRSTTGEAPLKENLAANMLVRSGWQKTPVTLMDPFCGSGTILIEAAMIACDMAPGLHRERFGFEHWHRHNDKVWQGLLDEAKARASIGKTRCTTKFYGSDIDSRLVALAKRNAENAGVLDLIEFDVSNALNVKVPGESGYLISNPPYGERLGTVTALLQLYYQLGDKFKAEFGGWNLAILNSDVELLSALKLKADKQMKMNNGALECAFNLYTVHAENTRRVDPSKINRDGDVSDIAVPFANRVKKNFKQLQKWAKKEGVDSYRIYDADLPDYKVAIDKYLDYVVIQEYTAPVDIPESVTKRRLTDVLITLPSAIGIDPENIILKTRERQKGTNQYEKIQANKLELITTEYGAKFKLNLKEYLDTGLFLDHRLTRKLVGQKSKDKDVLNLFAYTGTASVHAALGGAKSVKTVDMSNTYTNWAKENFALNGLNDDKYQFVQANCMQWIKTTHDKFDLIFIDPPTFSNSKRMEDSFDVLRDHVALLSSLIKLLNPGGEIIFSNNKRKFKMEIEALEALNFTVKNIDNQTLPLDFKRNPQIHNTWLLTHAE.

Residues 43-154 (LGYRITLWSR…RGQITIGLNF (112 aa)) enclose the THUMP domain.

It belongs to the methyltransferase superfamily. RlmKL family.

It is found in the cytoplasm. The catalysed reaction is guanosine(2445) in 23S rRNA + S-adenosyl-L-methionine = N(2)-methylguanosine(2445) in 23S rRNA + S-adenosyl-L-homocysteine + H(+). It carries out the reaction guanosine(2069) in 23S rRNA + S-adenosyl-L-methionine = N(2)-methylguanosine(2069) in 23S rRNA + S-adenosyl-L-homocysteine + H(+). In terms of biological role, specifically methylates the guanine in position 2445 (m2G2445) and the guanine in position 2069 (m7G2069) of 23S rRNA. This chain is Ribosomal RNA large subunit methyltransferase K/L, found in Shewanella sediminis (strain HAW-EB3).